The primary structure comprises 313 residues: CBK1 kinase activator protein MOB2 (313 aa).

Positions 1–109 (MSFLNTIRGL…KRSSIQTTKS (109 aa)) are disordered. Over residues 23–69 (PSNNAIYSHSNLSGNGLRRTQSPTKFSPSKLSSKGAQGSAAYTSSPT) the composition is skewed to polar residues. Phosphoserine; by CDC28 occurs at positions 44, 51, 67, and 97. A compositionally biased stretch (low complexity) spans 76 to 97 (QSLQHQDSQSSLQYQQQSGSVS). A compositionally biased stretch (polar residues) spans 98–109 (PSKRSSIQTTKS).

It belongs to the MOB1/phocein family. As to quaternary structure, interacts with protein kinase CBK1 to form the RAM CBK1-MOB2 kinase complex. Phosphorylated by CDC28 at Ser-44, Ser-51, Ser-67, and Ser-97. Phosphorylation occurs during bud emergence and is maintained until the G2/M transition. Dephosphorylated at the end of mitosis. Phosphorylation is required for the maintenance of polarisome components in hyphae.

Its subcellular location is the nucleus. The protein resides in the cytoplasm. Functionally, functions as an activator subunit for the CBK1 protein kinase. Part of the regulation of ACE2 activity and cellular morphogenesis (RAM) signaling network. The RAM network is critically required for hyphal growth as well as normal vegetative growth, and for polarization of lipid rafts and the actin cytoskeleton. It play an essential role in biofilm formation. The RAM network also plays a role in serum- and antifungal azoles-induced activation of ergosterol biosynthesis genes, especially those involved in the late steps of ergosterol biosynthesis. The chain is CBK1 kinase activator protein MOB2 (MOB2) from Candida albicans (strain SC5314 / ATCC MYA-2876) (Yeast).